The chain runs to 211 residues: Large ribosomal subunit protein bL25 (211 aa).

The tract at residues histidine 188–glutamine 211 is disordered. The segment covering glutamate 200–glutamine 211 has biased composition (low complexity).

Belongs to the bacterial ribosomal protein bL25 family. CTC subfamily. Part of the 50S ribosomal subunit; part of the 5S rRNA/L5/L18/L25 subcomplex. Contacts the 5S rRNA. Binds to the 5S rRNA independently of L5 and L18.

Functionally, this is one of the proteins that binds to the 5S RNA in the ribosome where it forms part of the central protuberance. In Desulforudis audaxviator (strain MP104C), this protein is Large ribosomal subunit protein bL25.